Reading from the N-terminus, the 765-residue chain is MAGDDEDRAVPAAEGAPPPSALPPVSGLDVKAAEAEHARLSEEVAQANLAYYQEDAPFISDAEYDASKRRLEEIEARFPDLAHSGSPTAQVGAAPDTRFAKVPHRLPMLSLENGFSQGDVEAFVQRVRSFLNLASGAPLEVTAEPKIDGLSLSLRYEGGRLVQAATRGDGAVGENVTANARTIADIPGQLSGDGYPEVLEIRGECYMSHEDFEKLNQSETGRVFANPRNAAAGSLRQLDPSVTAARPLRFFAYAWGEVSASFAGTQMEAVRRMQAFGFQTNPLTRICASVSEMLSAWAEIEQMRATLGYDIDGVVYKVNDLAYQARLGMRSTTPRWALAHKFPAERAWTRLEAIDIQVGRTGALSPVARLHPVTVGGVVVSNATLHNEDYIAGRGADGSEIRGGKDIRIGDWVEVYRAGDVIPKVADVDLAKRPSEAEPYAFPTTCPECGSPAIREEGDSVRRCTGGLICPAQAVEKLRHFVSRAAFDIEGLGAKLVEELFRDGWIAEPADIFTLQDRYGPGQLTQLKNREGWGEKSAASLFQAIEKRREIPLARLLFALGIRHVGEVAAQDLARHYGSWEALEIALDTARPAALAHRVAEDAALAEREAARAEGRRARPSEARAAALAQVDLSPEATAAWTGLIAADGIGPVLAMSLSDAFANERERAAIDRLVSFLTVLPPEARATDSAIAGKTLVFTGTLEKMTRAEAKARAEALGAHVAGSVSAKTDLLIAGPGAGSKAKKAAELGIKVIDEDEWLAIAQG.

Residues 1–34 are disordered; that stretch reads MAGDDEDRAVPAAEGAPPPSALPPVSGLDVKAAE. NAD(+) is bound by residues 61-65, 110-111, and Glu-144; these read DAEYD and SL. Lys-146 functions as the N6-AMP-lysine intermediate in the catalytic mechanism. Residues Arg-167, Glu-204, Lys-317, and Lys-341 each contribute to the NAD(+) site. Cys-446, Cys-449, Cys-464, and Cys-470 together coordinate Zn(2+). Residues 687-765 enclose the BRCT domain; the sequence is ATDSAIAGKT…EDEWLAIAQG (79 aa).

Belongs to the NAD-dependent DNA ligase family. LigA subfamily. The cofactor is Mg(2+). Requires Mn(2+) as cofactor.

The enzyme catalyses NAD(+) + (deoxyribonucleotide)n-3'-hydroxyl + 5'-phospho-(deoxyribonucleotide)m = (deoxyribonucleotide)n+m + AMP + beta-nicotinamide D-nucleotide.. Functionally, DNA ligase that catalyzes the formation of phosphodiester linkages between 5'-phosphoryl and 3'-hydroxyl groups in double-stranded DNA using NAD as a coenzyme and as the energy source for the reaction. It is essential for DNA replication and repair of damaged DNA. The polypeptide is DNA ligase (Paracoccus denitrificans (strain Pd 1222)).